The following is a 560-amino-acid chain: MFS-type transporter pgmG (560 aa).

The segment at 1–32 (MSETVTQTETDQRPATARSLGAEEKEAKSDEQ) is disordered. The span at 21 to 31 (GAEEKEAKSDE) shows a compositional bias: basic and acidic residues. Transmembrane regions (helical) follow at residues 45–65 (FIVI…NTIV), 84–104 (WLSV…SKIY), 111–131 (WLYL…GAAP), 141–161 (ALAG…LSVN), 174–194 (TGLT…GFAV), 201–221 (WSFY…LFML), 242–262 (LGTI…NFGG), and 275–295 (CFVV…YCIG). Residue Asn-300 is glycosylated (N-linked (GlcNAc...) asparagine). Residues 313–333 (FIILFVQTASVATVFFVPIYF) form a helical membrane-spanning segment. Asn-343 carries an N-linked (GlcNAc...) asparagine glycan. 5 helical membrane passes run 346-366 (AIDA…AMIL), 378-398 (MPWY…MYTI), 409-429 (GYMI…FAVA), 440-460 (VATG…LAIA), and 515-535 (ISQV…LAIF).

It belongs to the major facilitator superfamily. TCR/Tet family.

It is found in the membrane. Functionally, MFS-type transporter; part of the gene cluster that mediates the biosynthesis of pleosporalin A, ascomycone A, as well as a third cryptic naphthoquinone derived pigment, all responsible for the coloration of conidia. Seems not to be involved in pigment biosynthesis although its expression is regulated by the cluster-specific transcription factor pgmR. In Aspergillus terreus, this protein is MFS-type transporter pgmG.